Consider the following 461-residue polypeptide: Mannan endo-1,4-beta-mannosidase 4 (461 aa).

Substrate is bound by residues tryptophan 80 and asparagine 195. Residue glutamate 196 is the Proton donor of the active site. Tyrosine 274 serves as a coordination point for substrate. Residue glutamate 314 is the Nucleophile of the active site. The substrate site is built by tryptophan 357 and aspartate 364.

It belongs to the glycosyl hydrolase 5 (cellulase A) family. Ubiquitous.

The catalysed reaction is Random hydrolysis of (1-&gt;4)-beta-D-mannosidic linkages in mannans, galactomannans and glucomannans.. The polypeptide is Mannan endo-1,4-beta-mannosidase 4 (MAN4) (Oryza sativa subsp. japonica (Rice)).